Reading from the N-terminus, the 422-residue chain is UDP-N-acetylglucosamine 1-carboxyvinyltransferase (422 aa).

22–23 contributes to the phosphoenolpyruvate binding site; that stretch reads KN. R93 contacts UDP-N-acetyl-alpha-D-glucosamine. The active-site Proton donor is C117. Residue C117 is modified to 2-(S-cysteinyl)pyruvic acid O-phosphothioketal. UDP-N-acetyl-alpha-D-glucosamine contacts are provided by residues 122–126, D305, and I327; that span reads RPVDQ.

This sequence belongs to the EPSP synthase family. MurA subfamily.

The protein resides in the cytoplasm. It catalyses the reaction phosphoenolpyruvate + UDP-N-acetyl-alpha-D-glucosamine = UDP-N-acetyl-3-O-(1-carboxyvinyl)-alpha-D-glucosamine + phosphate. The protein operates within cell wall biogenesis; peptidoglycan biosynthesis. Its function is as follows. Cell wall formation. Adds enolpyruvyl to UDP-N-acetylglucosamine. This Bordetella parapertussis (strain 12822 / ATCC BAA-587 / NCTC 13253) protein is UDP-N-acetylglucosamine 1-carboxyvinyltransferase.